Reading from the N-terminus, the 573-residue chain is 3-oxosteroid 1-dehydrogenase (573 aa).

Residue 7-36 participates in FAD binding; sequence DLIVVGSGAGACWAPIRAQEQGLKTLVVEK.

Belongs to the FAD-dependent oxidoreductase 2 family. 3-oxosteroid dehydrogenase subfamily. FAD serves as cofactor.

Its subcellular location is the cell inner membrane. It carries out the reaction a 3-oxosteroid + A = a 3-oxo-Delta(1)-steroid + AH2. It participates in lipid metabolism; steroid degradation. In terms of biological role, dehydrogenates steroids by introducing a double bond in steroid ring A. The protein is 3-oxosteroid 1-dehydrogenase of Comamonas testosteroni (Pseudomonas testosteroni).